The sequence spans 578 residues: Arginine--tRNA ligase (578 aa).

The short motif at 127-137 (PNLAKEMHVGH) is the 'HIGH' region element.

Belongs to the class-I aminoacyl-tRNA synthetase family. As to quaternary structure, monomer.

It is found in the cytoplasm. The catalysed reaction is tRNA(Arg) + L-arginine + ATP = L-arginyl-tRNA(Arg) + AMP + diphosphate. The sequence is that of Arginine--tRNA ligase from Pseudomonas fluorescens (strain Pf0-1).